The following is a 493-amino-acid chain: Glycosyltransferase alg8 (493 aa).

4 helical membrane-spanning segments follow: residues 13–32 (GWLFYLSLLMGLAAALPTSI), 47–69 (VGIWRYSMGITHFVRGMIFLYIV), 380–402 (LTVAIIASFKYGGAFLLMYLLWI), and 422–444 (PAYPMILYYNQIVGALMKIYVFF).

Belongs to the glycosyltransferase 2 family.

Its subcellular location is the cell membrane. Its pathway is glycan biosynthesis; alginate biosynthesis. Functionally, possibly a processive enzyme that polymerizes GDP-mannuronic acid. The sequence is that of Glycosyltransferase alg8 (alg8) from Pseudomonas syringae pv. tomato (strain ATCC BAA-871 / DC3000).